The following is a 379-amino-acid chain: Fimbrium subunit Fim1C (379 aa).

The N-terminal stretch at 1–17 (MEVKSLLMVMATLTIAG) is a signal peptide. Cys-18 is lipidated: N-palmitoyl cysteine. Residue Cys-18 is the site of S-diacylglycerol cysteine attachment. A propeptide spanning residues 18 to 45 (CSQNEMTEMNPDTNRTIGLDVYTEVQTR) is cleaved from the precursor.

This sequence belongs to the bacteroidetes fimbrillin superfamily. Mfa-like family. As to quaternary structure, may be part of the fimbrial tip.

The protein localises to the fimbrium. The protein resides in the cell outer membrane. Probably a component of the fimbrium tip. Fimbriae are filamentous appendages on the cell surface that mediate cell adhesion and biofilm formation. The chain is Fimbrium subunit Fim1C (fim1C) from Phocaeicola vulgatus (strain ATCC 8482 / DSM 1447 / JCM 5826 / CCUG 4940 / NBRC 14291 / NCTC 11154) (Bacteroides vulgatus).